A 439-amino-acid chain; its full sequence is Putrescine transporter PotE (439 aa).

12 helical membrane-spanning segments follow: residues 10–30, 40–60, 91–111, 114–134, 152–172, 186–206, 225–245, 276–296, 321–341, 354–374, 387–407, and 410–430; these read GVVQ…IIML, ISII…WAFA, TYGV…VGYG, LLGA…VLWI, ITVW…WFWF, APFF…FLGL, IAVL…TNVI, VIMA…QFTI, APVQ…LMTI, NLAV…LVII, VANF…YSSG, and AMLY…LVSP.

Belongs to the amino acid-polyamine-organocation (APC) superfamily. Basic amino acid/polyamine antiporter (APA) (TC 2.A.3.2) family.

It is found in the cell inner membrane. The catalysed reaction is putrescine(in) + H(+)(in) = putrescine(out) + H(+)(out). It carries out the reaction putrescine(in) + L-ornithine(out) = putrescine(out) + L-ornithine(in). In terms of biological role, catalyzes both the uptake and excretion of putrescine. The uptake of putrescine is dependent on the membrane potential and the excretion involves putrescine-ornithine antiporter activity. In Escherichia coli O6:H1 (strain CFT073 / ATCC 700928 / UPEC), this protein is Putrescine transporter PotE.